The chain runs to 267 residues: Ras-related protein Rab-36 (267 aa).

GTP is bound by residues V68, G69, K70, T71, S72, D83, Y86, and T89. T71 serves as a coordination point for Mg(2+). The short motif at R76–F94 is the Switch 1 element. The Mg(2+) site is built by T89 and D112. A Switch 2 motif is present at residues T113–V132. Positions 115, 172, 174, 203, 204, and 205 each coordinate GTP. Residues C266 and C267 are each lipidated (S-geranylgeranyl cysteine).

This sequence belongs to the small GTPase superfamily. Rab family. Mg(2+) serves as cofactor.

Its subcellular location is the golgi apparatus membrane. It carries out the reaction GTP + H2O = GDP + phosphate + H(+). With respect to regulation, regulated by guanine nucleotide exchange factors (GEFs) which promote the exchange of bound GDP for free GTP. Regulated by GTPase activating proteins (GAPs) which increase the GTP hydrolysis activity. Inhibited by GDP dissociation inhibitors (GDIs). Its function is as follows. The small GTPases Rab are key regulators of intracellular membrane trafficking, from the formation of transport vesicles to their fusion with membranes. Rabs cycle between an inactive GDP-bound form and an active GTP-bound form that is able to recruit to membranes different sets of downstream effectors directly responsible for vesicle formation, movement, tethering and fusion. The sequence is that of Ras-related protein Rab-36 from Mus musculus (Mouse).